Here is a 305-residue protein sequence, read N- to C-terminus: Protein FdhE homolog (305 aa).

It belongs to the FdhE family.

The protein localises to the cytoplasm. Necessary for formate dehydrogenase activity. In Stutzerimonas stutzeri (strain A1501) (Pseudomonas stutzeri), this protein is Protein FdhE homolog.